The sequence spans 78 residues: Acyl carrier protein (78 aa).

Residues 2–77 (STIEERVKKI…AAIDFIQANQ (76 aa)) enclose the Carrier domain. O-(pantetheine 4'-phosphoryl)serine is present on serine 37.

It belongs to the acyl carrier protein (ACP) family. 4'-phosphopantetheine is transferred from CoA to a specific serine of apo-ACP by AcpS. This modification is essential for activity because fatty acids are bound in thioester linkage to the sulfhydryl of the prosthetic group.

The protein localises to the cytoplasm. It participates in lipid metabolism; fatty acid biosynthesis. Carrier of the growing fatty acid chain in fatty acid biosynthesis. The chain is Acyl carrier protein from Pectobacterium atrosepticum (strain SCRI 1043 / ATCC BAA-672) (Erwinia carotovora subsp. atroseptica).